The following is a 190-amino-acid chain: Protein GrpE (190 aa).

Positions 1 to 41 are disordered; it reads MAKEKQEEQQKQTAPENEKAPKKDIKKEASDKKGDQTSKLK.

It belongs to the GrpE family. In terms of assembly, homodimer.

It is found in the cytoplasm. Functionally, participates actively in the response to hyperosmotic and heat shock by preventing the aggregation of stress-denatured proteins, in association with DnaK and GrpE. It is the nucleotide exchange factor for DnaK and may function as a thermosensor. Unfolded proteins bind initially to DnaJ; upon interaction with the DnaJ-bound protein, DnaK hydrolyzes its bound ATP, resulting in the formation of a stable complex. GrpE releases ADP from DnaK; ATP binding to DnaK triggers the release of the substrate protein, thus completing the reaction cycle. Several rounds of ATP-dependent interactions between DnaJ, DnaK and GrpE are required for fully efficient folding. The protein is Protein GrpE of Limosilactobacillus reuteri (strain DSM 20016) (Lactobacillus reuteri).